Consider the following 758-residue polypeptide: MSDTQDNAPVSAQGVDQKAAAGCPVAHDSVTAHGSESESPAIDSPSAVGGGRPRTNRDWWPNQLDLSVLSTNSAKVNPLGEDFSYAKEFAKLDVEALKRDITEVLTTSQDWWPADFGHYGGLMIRLSWHAAGTYRIHDGRGGAGDGGQRFAPLNSWPDNVNLDKARRLLWPVKQKYGQKISWADLLVLAGNVALESMGFKTFGFGFGREDVWEPEEIFWGPEDTWLGDERYVSEKEFSAGVGATEMGLIYVNPEGPRGNADPASAAHFIRETFRRMAMNDEETVALIAGGHTFGKTHGAGVADDHVGPEPEGAPLEAQGLGWMSSHASGVGADTISSGLEVTWTDRPTQWSNRFFEILFGYEWELTTSPGGAKQWVAKDAEAIIPDAYDSTKKHKPTMLTTDLSLRVDPAYERISRRFLENPDEFALAFAKAWYKLLHRDMGPVSRFLGPWVPQTQLWQDPVPAVDHELVGAADIAALKAKVLESGLTTTQLVSTAWASAASFRHTDKRGGANGARIRLEPQRSWEVNQPEQLATVLPALEEIQREFNAAGGAKISLADLIVLAGSAAVEKAARDAGVEVTVPFRPGRTDATQEQTDVDSFRVLEPRADAFRNYLRPGEKTQPEVLLVDRAYLLNLTAPEMTVLIGGLRALEANAGGSRHGVLTDRPGVLTNDFFTNLLASGARWKASESTEHAYEIRDVATDKVKWTASAVDLIFGSNSQLRALAEVYASEDAREKFVQDFVAAWTKVMELDRFDLA.

The span at 1 to 10 (MSDTQDNAPV) shows a compositional bias: polar residues. The interval 1-57 (MSDTQDNAPVSAQGVDQKAAAGCPVAHDSVTAHGSESESPAIDSPSAVGGGRPRTNR) is disordered. Residues 128 to 250 (WHAAGTYRIH…VGATEMGLIY (123 aa)) constitute a cross-link (tryptophyl-tyrosyl-methioninium (Trp-Tyr) (with M-276)). His129 functions as the Proton acceptor in the catalytic mechanism. The segment at residues 250-276 (YVNPEGPRGNADPASAAHFIRETFRRM) is a cross-link (tryptophyl-tyrosyl-methioninium (Tyr-Met) (with W-128)). His291 serves as a coordination point for heme b.

This sequence belongs to the peroxidase family. Peroxidase/catalase subfamily. Homodimer or homotetramer. Requires heme b as cofactor. Post-translationally, formation of the three residue Trp-Tyr-Met cross-link is important for the catalase, but not the peroxidase activity of the enzyme.

It catalyses the reaction H2O2 + AH2 = A + 2 H2O. It carries out the reaction 2 H2O2 = O2 + 2 H2O. Its function is as follows. Bifunctional enzyme with both catalase and broad-spectrum peroxidase activity. The sequence is that of Catalase-peroxidase from Salinispora tropica (strain ATCC BAA-916 / DSM 44818 / JCM 13857 / NBRC 105044 / CNB-440).